The following is a 923-amino-acid chain: MEGAKPTLQLVYQAVQALYHDPDPSGKERASFWLGELQRSVHAWEISDQLLQIRQDVESCYFAAQTMKMKIQTSFYELPTDSHASLRDSLLTHIQNLKDLSPVIVTQLALAIADLALQMPSWKGCVQTLVEKYSNDVTSLPFLLEILTVLPEEVHSRSLRIGANRRTEIIEDLAFYSSTVVSLLMTCVEKAGTDEKMLMKVFRCLGSWFNLGVLDSNFMANNKLLALLFEVLQQDKTSSNLHEAASDCVCSALYAIENVETNLPLAMQLFQGVLTLETAYHMAVAREDLDKVLNYCRIFTELCETFLEKIVCTPGQGLGDLRTLELLLICAGHPQYEVVEISFNFWYRLGEHLYKTNDEVIHSIFKAYIQRLLHALARHCQLEPDHEGVPEETDDFGEFRMRVSDLVKDLIFLIGSMECFAQLYSTLKEGNPPWEVTEAVLFIMAAIAKSVDPENNPTLVEVLEGVVHLPETVHTAVRYTSIELVGEMSEVVDRNPQFLDPVLGYLMKGLCEKPLASAAAKAIHNICSVCRDHMAQHFNGLLEIAHSLDSFMLSPEAAVGLLKGTALVLARLPLDKITECLSELCSVQVMALKKLLSQEPSNGISSDPTVFLDRLAVIFRHTNPIVENGQTHPCQKVIQEIWPVLSETLNKHRADNRIVERCCRCLRFAVRCVGKGSAALLQPLVTQMVNVYHVHQHSCFLYLGSILVDEYGMEEGCRQGLLDMLQALCIPTFQLLEQQNGLQNHPDTVDDLFRLATRFIQRSPVTLLRSQVVIPILQWAIASTTLDHRDANSSVMRFLRDLIHTGVANDHEEDFELRKELIGQVMSQLGQQLVSQLLHTCCFCLPPYTLPDVAEVLWEIMQVDRPTFCRWLENSLKGLPKETTVGAVTVTHKQLTDFHKQVTSAEECKQVCWALRDFTRLFR.

Met1 is modified (N-acetylmethionine). Residue Ser74 is modified to Phosphoserine. Phosphothreonine occurs at positions 242 and 896.

As to quaternary structure, interacts with (GTP-bound) Ran. Interacts with (phosphorylated) SFRS1 and SFRS2; leading to their nuclear import. Interacts with NUP62. Interacts with RBM4. Interacts with CPSF6, promoting its nuclear import.

Its subcellular location is the nucleus envelope. It localises to the cytoplasm. In terms of biological role, importin, which transports target proteins into the nucleus. Specifically mediates the nuclear import of splicing factor serine/arginine (SR) proteins, such as RBM4, SFRS1 and SFRS2, by recognizing phosphorylated SR domains. Also mediates the nuclear import of serine/arginine (SR) protein CPSF6, independently of CPSF6 phosphorylation. The nuclear import process is regulated by the small GTPase Ran that partitions between cytoplasm and nucleus in the predominantly GDP- and GTP-bound form, respectively. Importin associates with target cargo proteins in the cytoplasm, and the competitive binding of GTP-bound Ran induces the release of cargos in the nucleus. The polypeptide is Transportin-3 (Mus musculus (Mouse)).